A 255-amino-acid polypeptide reads, in one-letter code: tRNA (guanine-N(7)-)-methyltransferase (255 aa).

Basic and acidic residues predominate over residues 1–11 (MSISDNSRDQL). The segment at 1–25 (MSISDNSRDQLGELPAGRPLQSDFD) is disordered. The S-adenosyl-L-methionine site is built by E83, E108, D135, and D158. Residue D158 is part of the active site. K162 serves as a coordination point for substrate. An interaction with RNA region spans residues 164-169 (RHNKRR). Substrate-binding positions include D194 and 232-235 (TKFE).

Belongs to the class I-like SAM-binding methyltransferase superfamily. TrmB family.

It carries out the reaction guanosine(46) in tRNA + S-adenosyl-L-methionine = N(7)-methylguanosine(46) in tRNA + S-adenosyl-L-homocysteine. The protein operates within tRNA modification; N(7)-methylguanine-tRNA biosynthesis. In terms of biological role, catalyzes the formation of N(7)-methylguanine at position 46 (m7G46) in tRNA. The polypeptide is tRNA (guanine-N(7)-)-methyltransferase (Corynebacterium glutamicum (strain ATCC 13032 / DSM 20300 / JCM 1318 / BCRC 11384 / CCUG 27702 / LMG 3730 / NBRC 12168 / NCIMB 10025 / NRRL B-2784 / 534)).